Consider the following 331-residue polypeptide: Protoheme IX farnesyltransferase (331 aa).

Helical transmembrane passes span 63–83 (LACTLGGGALAAAAAGALNCL), 109–129 (SVFIGAVACTLVSSALLVSGV), 132–152 (LAAGLTLLGLCSYVLLYTAFL), 160–180 (IVFGGVAGAIPPLVGASAAAG), 188–208 (WLFSLVMVWTPAHFWALAILL), 215–235 (VGIPMLPTVSGPFVTAKAISV), 241–261 (VFLSFLGCFVLPEGGLLYGIL), and 294–314 (ILYMFGVCFLLVISRLQVSIV).

Belongs to the UbiA prenyltransferase family. Protoheme IX farnesyltransferase subfamily.

It is found in the cell inner membrane. The enzyme catalyses heme b + (2E,6E)-farnesyl diphosphate + H2O = Fe(II)-heme o + diphosphate. The protein operates within porphyrin-containing compound metabolism; heme O biosynthesis; heme O from protoheme: step 1/1. Functionally, converts heme B (protoheme IX) to heme O by substitution of the vinyl group on carbon 2 of heme B porphyrin ring with a hydroxyethyl farnesyl side group. This Prochlorococcus marinus (strain NATL1A) protein is Protoheme IX farnesyltransferase.